The sequence spans 450 residues: Proline--tRNA ligase (450 aa).

This sequence belongs to the class-II aminoacyl-tRNA synthetase family. ProS type 2 subfamily. Homodimer.

The protein resides in the cytoplasm. The enzyme catalyses tRNA(Pro) + L-proline + ATP = L-prolyl-tRNA(Pro) + AMP + diphosphate. Its function is as follows. Catalyzes the attachment of proline to tRNA(Pro) in a two-step reaction: proline is first activated by ATP to form Pro-AMP and then transferred to the acceptor end of tRNA(Pro). This Paracoccus denitrificans (strain Pd 1222) protein is Proline--tRNA ligase.